A 506-amino-acid polypeptide reads, in one-letter code: Maturase K (506 aa).

This sequence belongs to the intron maturase 2 family. MatK subfamily.

The protein resides in the plastid. It localises to the chloroplast. In terms of biological role, usually encoded in the trnK tRNA gene intron. Probably assists in splicing its own and other chloroplast group II introns. This is Maturase K from Mimosa pudica (Sensitive plant).